Reading from the N-terminus, the 361-residue chain is MGNESSTLVDEKTPPSVLEARTVEAVAKYVKEKPVRRVVVMVGAGISTAAGIPDFRSPDTGIYANLVHLDLPDPEAVFDISFFRQNPKPFYALARELAPGQYRPTLAHSFVKLLYDKGKLLKHFTQNIDCLERLAGVPGDMIIEAHGSFATQRCIECKTAYPDDLMKEAIAKGEVPNCAECQGLVKPDIVFFGEALPSAFFDNRTLPETADLCIVMGTSLSVQPFASLPSFVADGVPRVLINRERVGGLGSRPDDVLILDDCDNGVRKLARALGWEDELERLWEEANPNQKSREEELATPRTREERLENEISRLTAEIDKTLKISDAYQKRVRERLEGEPLSSPESNGTGLAHVFPHLARR.

A Deacetylase sirtuin-type domain is found at 16-276 (SVLEARTVEA…RKLARALGWE (261 aa)). Residues 43–63 (GAGISTAAGIPDFRSPDTGIY) and 126–129 (QNID) each bind NAD(+). The Proton acceptor role is filled by His-146. Zn(2+)-binding residues include Cys-154, Cys-157, Cys-178, and Cys-181. NAD(+) contacts are provided by residues 217–219 (GTS), 242–244 (NRE), and Cys-262. A coiled-coil region spans residues 294–328 (EEELATPRTREERLENEISRLTAEIDKTLKISDAY). The segment at 335–361 (RLEGEPLSSPESNGTGLAHVFPHLARR) is disordered.

This sequence belongs to the sirtuin family. Class I subfamily. Zn(2+) is required as a cofactor.

It localises to the cytoplasm. The protein resides in the nucleus. The enzyme catalyses N(6)-acetyl-L-lysyl-[protein] + NAD(+) + H2O = 2''-O-acetyl-ADP-D-ribose + nicotinamide + L-lysyl-[protein]. Its function is as follows. NAD-dependent histone deacetylase, which could function in telomeric silencing, cell cycle progression and chromosome stability. This Emericella nidulans (strain FGSC A4 / ATCC 38163 / CBS 112.46 / NRRL 194 / M139) (Aspergillus nidulans) protein is NAD-dependent protein deacetylase hst2-1.